The sequence spans 312 residues: Eukaryotic translation initiation factor 2 subunit 2 (312 aa).

Disordered regions lie at residues 26–104 (AALG…NLDM) and 125–146 (ADQA…SSTW). The residue at position 44 (Ser-44) is a Phosphoserine. 2 stretches are compositionally biased toward acidic residues: residues 90-102 (AASE…EINL) and 125-142 (ADQA…DEDN). Ser-133 bears the Phosphoserine mark. Thr-145 is modified (phosphothreonine). The C4-type zinc finger occupies 260 to 284 (CHTCRSPETILQKDTRLFFLQCESC).

This sequence belongs to the eIF-2-beta/eIF-5 family. In terms of assembly, eukaryotic translation initiation factor 2 eIF2 is a heterotrimeric complex composed of an alpha, a beta and a gamma subunit.

The protein resides in the cytoplasm. It localises to the cytosol. In terms of biological role, component of the eIF2 complex that functions in the early steps of protein synthesis by forming a ternary complex with GTP and initiator tRNA. This complex binds to a 40S ribosomal subunit, followed by mRNA binding to form a 43S pre-initiation complex (43S PIC). Junction of the 60S ribosomal subunit to form the 80S initiation complex is preceded by hydrolysis of the GTP bound to eIF2 and release of an eIF2-GDP binary complex. In order for eIF2 to recycle and catalyze another round of initiation, the GDP bound to eIF2 must exchange with GTP by way of a reaction catalyzed by eIF2B. The sequence is that of Eukaryotic translation initiation factor 2 subunit 2 from Drosophila melanogaster (Fruit fly).